Reading from the N-terminus, the 471-residue chain is 3-isopropylmalate dehydratase large subunit (471 aa).

The [4Fe-4S] cluster site is built by cysteine 347, cysteine 407, and cysteine 410.

It belongs to the aconitase/IPM isomerase family. LeuC type 1 subfamily. In terms of assembly, heterodimer of LeuC and LeuD. [4Fe-4S] cluster serves as cofactor.

It catalyses the reaction (2R,3S)-3-isopropylmalate = (2S)-2-isopropylmalate. The protein operates within amino-acid biosynthesis; L-leucine biosynthesis; L-leucine from 3-methyl-2-oxobutanoate: step 2/4. In terms of biological role, catalyzes the isomerization between 2-isopropylmalate and 3-isopropylmalate, via the formation of 2-isopropylmaleate. The polypeptide is 3-isopropylmalate dehydratase large subunit (Buchnera aphidicola subsp. Acyrthosiphon pisum (strain APS) (Acyrthosiphon pisum symbiotic bacterium)).